We begin with the raw amino-acid sequence, 123 residues long: uncharacterized protein (123 aa).

A signal peptide spans 1–19 (MKIKYFFIPLFSSAILFSA). Cys-20 carries the N-palmitoyl cysteine lipid modification. The S-diacylglycerol cysteine moiety is linked to residue Cys-20.

Belongs to the MG439/MG440 family.

Its subcellular location is the cell membrane. This is an uncharacterized protein from Mycoplasma pneumoniae (strain ATCC 29342 / M129 / Subtype 1) (Mycoplasmoides pneumoniae).